Consider the following 167-residue polypeptide: NAD(P)H-quinone oxidoreductase subunit I, chloroplastic (167 aa).

4Fe-4S ferredoxin-type domains lie at 55-84 (GRIHFEFDKCIACEVCVRVCPIDLPVVDWK) and 95-124 (LNYSIDFGICIFCGNCVEYCPTNCLSMTEE). Residues cysteine 64, cysteine 67, cysteine 70, cysteine 74, cysteine 104, cysteine 107, cysteine 110, and cysteine 114 each coordinate [4Fe-4S] cluster.

The protein belongs to the complex I 23 kDa subunit family. In terms of assembly, NDH is composed of at least 16 different subunits, 5 of which are encoded in the nucleus. The cofactor is [4Fe-4S] cluster.

It is found in the plastid. It localises to the chloroplast thylakoid membrane. It carries out the reaction a plastoquinone + NADH + (n+1) H(+)(in) = a plastoquinol + NAD(+) + n H(+)(out). It catalyses the reaction a plastoquinone + NADPH + (n+1) H(+)(in) = a plastoquinol + NADP(+) + n H(+)(out). Its function is as follows. NDH shuttles electrons from NAD(P)H:plastoquinone, via FMN and iron-sulfur (Fe-S) centers, to quinones in the photosynthetic chain and possibly in a chloroplast respiratory chain. The immediate electron acceptor for the enzyme in this species is believed to be plastoquinone. Couples the redox reaction to proton translocation, and thus conserves the redox energy in a proton gradient. In Draba nemorosa (Woodland whitlowgrass), this protein is NAD(P)H-quinone oxidoreductase subunit I, chloroplastic.